A 148-amino-acid polypeptide reads, in one-letter code: Ribosomal RNA large subunit methyltransferase H (148 aa).

Residues L62, G94, and 113–118 contribute to the S-adenosyl-L-methionine site; that span reads LSLLTL.

The protein belongs to the RNA methyltransferase RlmH family. As to quaternary structure, homodimer.

The protein localises to the cytoplasm. It catalyses the reaction pseudouridine(1915) in 23S rRNA + S-adenosyl-L-methionine = N(3)-methylpseudouridine(1915) in 23S rRNA + S-adenosyl-L-homocysteine + H(+). In terms of biological role, specifically methylates the pseudouridine at position 1915 (m3Psi1915) in 23S rRNA. The sequence is that of Ribosomal RNA large subunit methyltransferase H from Deinococcus geothermalis (strain DSM 11300 / CIP 105573 / AG-3a).